We begin with the raw amino-acid sequence, 585 residues long: MATGFSFGSGTLGSTTVAPGGTGTGSGFSFGASSTPSVGLNFGTLGSSATPASTSTSASGFGTGLFGSKPGTGFTLGGTSAGTTATTSASTTGFSLGFSKPAASATPFALPVTSTTASGLTLSSALTSAPAASTGFTLNNLGATPATTTAASTGLSLGGALAGLGGSLFQSGNTATSGLGQNALSLSLGTATPTSAASSEGLGGIDFSTSSDKKSDKTGTRPEDSKALKDENLPPVICQDVENLQKFVKEQKQVQEEISRMSSKAMLKVQEDIKALKQLLSLAASGLQRNTLNIDKLKLETAQELKNAEIALRTQKTPPGLQHENTAPADYFRVLVQQFEVQLQQYRQQIEELENHLATQANNSHITPQDLSMAMQKIYQTFVALAAQLQSIHENVKVLKEQYLSYRKMFLGDAGDVFEARRTEAKKWQNAPRVTTGPTPFSTMPNAAAVAMAATLTQQQQPATGPQPSLGVSFGTPFGSGIGTGLQSSGLGSSNLGGFGTSSGFGCGTTGASTFGFGTTDKPSGSLSAGFGSSSTSGFNFSNPGITASAGLTFGVSNPASAGFGTGGQLLQLKRPPAGNKRGKR.

5 tandem repeats follow at residues 7–8 (FG), 30–31 (FG), 42–43 (FG), 61–62 (FG), and 66–67 (FG). The segment at 7–565 (FGSGTLGSTT…VSNPASAGFG (559 aa)) is 14 X 2 AA repeats of F-G. The interval 194–232 (TSAASSEGLGGIDFSTSSDKKSDKTGTRPEDSKALKDEN) is disordered. Over residues 211–232 (SDKKSDKTGTRPEDSKALKDEN) the composition is skewed to basic and acidic residues. Coiled-coil stretches lie at residues 242–262 (ENLQ…SRMS) and 300–367 (ETAQ…SHIT). Phosphothreonine is present on Thr317. 9 consecutive repeat copies span residues 474–475 (FG), 478–479 (FG), 499–500 (FG), 505–506 (FG), 515–516 (FG), 517–518 (FG), 531–532 (FG), 554–555 (FG), and 564–565 (FG). Positions 563-585 (GFGTGGQLLQLKRPPAGNKRGKR) are disordered.

It belongs to the NUP58 family. Component of the p62 complex, a complex composed of NUP62, NUP54, and isoform p58 and isoform p45 of NUP58. Isoform p58 interacts with NUTF2. Isoform p58 interacts with SRP1-alpha and Importin p97 proteins when they are together, but not with SRP1-alpha protein alone. In terms of processing, O-glycosylated. In terms of tissue distribution, expressed in liver.

The protein resides in the nucleus. It localises to the nuclear pore complex. Its subcellular location is the nucleus membrane. In terms of biological role, component of the nuclear pore complex, a complex required for the trafficking across the nuclear membrane. The protein is Nucleoporin p58/p45 of Rattus norvegicus (Rat).